Here is a 75-residue protein sequence, read N- to C-terminus: MNRFVIICLLFTYYVIWSLLPIFEIENSNPVVSLLFPISSNVAIFLPIFLLLIGFTLTGSVLGVLLIRSDKKKKV.

2 consecutive transmembrane segments (helical) span residues 5–25 and 42–62; these read VIIC…IFEI and VAIF…GSVL.

The protein resides in the membrane. This is an uncharacterized protein from Saccharomyces cerevisiae (strain ATCC 204508 / S288c) (Baker's yeast).